A 461-amino-acid polypeptide reads, in one-letter code: MSRINKNVVLALLTLTSSAFLLFQLYYYKHYLSARNGPGSSKSKGNRVGFDSTQWRAVKKFIMLTSSQNVPVFLIDPWILESINKNFEQVKNASQGPASECRFFCVPRDFTAFALQYHLWKNEDGWFRIAENMGFQCLKTESKDPRLDGIDSLSGTEIPLHYVCKLTTHAIHLVVFHERSGNYLWHGHLRLKGHMDRKFVPFRKLQFGRYPGAFDRPELQQVTVDGLDMLIPKDPGRFLEEVPHSRFIECRYKEARAFLQQYIDDNTVDAMVFRKRAKELLQLAAKTLKDLGVPFWLSSGTCLGWYRQCGIIPYSKDVDLGIFIQDYKPDIILAFQEAGLPLKHKFGKVEDSLELSFQGKNDVKLDIFFFYEEADHLWNGGTQARTGKKFKYLFPKFTLCWTEFVDIKVHVPCETVDYIEANYGKTWKIPIKTWDWKSSPPNVQPNGIWPISEWDEVIQLY.

At 1-7 (MSRINKN) the chain is on the cytoplasmic side. Residues 6–27 (KNVVLALLTLTSSAFLLFQLYY) are required and sufficient for interaction with POMGNT1. Residues 8–28 (VVLALLTLTSSAFLLFQLYYY) traverse the membrane as a helical; Signal-anchor for type II membrane protein segment. Residues 29–461 (KHYLSARNGP…SEWDEVIQLY (433 aa)) lie on the Lumenal side of the membrane. A glycan (N-linked (GlcNAc...) asparagine) is linked at Asn92.

The protein belongs to the LicD transferase family. Forms a complex composed of FKTN/fukutin, FKRP and RXYLT1/TMEM5. Interacts (via transmembrane domain) with POMGNT1; the interaction is direct and is required for normal POMGNT1 location in Golgi membranes. Expressed in the retina, with highest levels found in the inner segments of photoreceptors and the outer plexiform layer (at protein level). Expressed at lower levels in the inner and outer nuclear layers, the inner plexiform layers, and the ganglion cell layers of the retina (at protein level). Expressed in the heart, brain, spleen, lung, liver, skeletal muscle, kidney and testis.

It is found in the golgi apparatus membrane. Its subcellular location is the cytoplasm. The protein localises to the nucleus. The protein resides in the endoplasmic reticulum. It carries out the reaction 3-O-[beta-D-GalNAc-(1-&gt;3)-beta-D-GlcNAc-(1-&gt;4)-(O-6-P-alpha-D-Man)]-Thr-[protein] + CDP-L-ribitol = 3-O-[Rib-ol-P-3-beta-D-GalNAc-(1-&gt;3)-beta-D-GlcNAc-(1-&gt;4)-(O-6-P-alpha-D-Man)]-Thr-[protein] + CMP + H(+). The protein operates within protein modification; protein glycosylation. Its function is as follows. Catalyzes the transfer of CDP-ribitol to the distal N-acetylgalactosamine of the phosphorylated O-mannosyl trisaccharide (N-acetylgalactosamine-beta-3-N-acetylglucosamine-beta-4-(phosphate-6-)mannose), a carbohydrate structure present in alpha-dystroglycan (DAG1). This constitutes the first step in the formation of the ribitol 5-phosphate tandem repeat which links the phosphorylated O-mannosyl trisaccharide to the ligand binding moiety composed of repeats of 3-xylosyl-alpha-1,3-glucuronic acid-beta-1. Required for normal location of POMGNT1 in Golgi membranes, and for normal POMGNT1 activity. May interact with and reinforce a large complex encompassing the outside and inside of muscle membranes. Could be involved in brain development. This Mus musculus (Mouse) protein is Ribitol-5-phosphate transferase FKTN.